A 425-amino-acid polypeptide reads, in one-letter code: Glutamate-1-semialdehyde 2,1-aminomutase (425 aa).

At Lys264 the chain carries N6-(pyridoxal phosphate)lysine.

Belongs to the class-III pyridoxal-phosphate-dependent aminotransferase family. HemL subfamily. As to quaternary structure, homodimer. Requires pyridoxal 5'-phosphate as cofactor.

Its subcellular location is the cytoplasm. It catalyses the reaction (S)-4-amino-5-oxopentanoate = 5-aminolevulinate. It functions in the pathway porphyrin-containing compound metabolism; protoporphyrin-IX biosynthesis; 5-aminolevulinate from L-glutamyl-tRNA(Glu): step 2/2. The protein is Glutamate-1-semialdehyde 2,1-aminomutase of Hydrogenobaculum sp. (strain Y04AAS1).